The following is a 335-amino-acid chain: Glycerol-3-phosphate dehydrogenase [NAD(P)+] (335 aa).

3 residues coordinate NADPH: tryptophan 14, arginine 33, and lysine 111. 3 residues coordinate sn-glycerol 3-phosphate: lysine 111, glycine 140, and serine 142. Alanine 144 contacts NADPH. Residues lysine 195, aspartate 248, serine 258, arginine 259, and asparagine 260 each coordinate sn-glycerol 3-phosphate. Residue lysine 195 is the Proton acceptor of the active site. Arginine 259 serves as a coordination point for NADPH. Valine 283 and glutamate 285 together coordinate NADPH.

The protein belongs to the NAD-dependent glycerol-3-phosphate dehydrogenase family.

The protein resides in the cytoplasm. The catalysed reaction is sn-glycerol 3-phosphate + NAD(+) = dihydroxyacetone phosphate + NADH + H(+). It carries out the reaction sn-glycerol 3-phosphate + NADP(+) = dihydroxyacetone phosphate + NADPH + H(+). The protein operates within membrane lipid metabolism; glycerophospholipid metabolism. In terms of biological role, catalyzes the reduction of the glycolytic intermediate dihydroxyacetone phosphate (DHAP) to sn-glycerol 3-phosphate (G3P), the key precursor for phospholipid synthesis. This chain is Glycerol-3-phosphate dehydrogenase [NAD(P)+], found in Burkholderia mallei (strain NCTC 10247).